The primary structure comprises 494 residues: Lipopolysaccharide core galacturonosyltransferase RgtB (494 aa).

10 helical membrane passes run 9-29 (ISWIFALLAAYFVLQVGVRLA), 74-94 (LTALSIVKNLLLFISYLLYGL), 104-124 (ALVAIATLGLLTIPQMAFEMQ), 127-147 (LTHTVAVFFSASIFFYGFIRS), 156-176 (YLIAGIGIGFGLLAKYNFAIL), 197-217 (WRLGLTAAVALVITLPHLFWL), 251-271 (LALAIISFAALTVAVFAIVFG), 291-311 (MMLVFLAGILLLIVFGGAAGI), 316-336 (LVPMLFILPLYFCLKIEAAGV), and 345-365 (FIPVVAVIMIGVPAALYGSVA).

Belongs to the glycosyltransferase 83 family.

Its subcellular location is the cell inner membrane. It functions in the pathway bacterial outer membrane biogenesis; LPS core biosynthesis. Functionally, involved in the modification of the lipopolysaccharide (LPS) inner core. Catalyzes the transfer of a galacturonic acid (GalA) residue to the 5-position of the outer Kdo (3-deoxy-D-manno-octulosonic acid) residue of the LPS inner core, using dodecaprenyl phosphate-GalA as the donor substrate. Acts after the other GalA transferase RgtA. The polypeptide is Lipopolysaccharide core galacturonosyltransferase RgtB (Rhizobium johnstonii (strain DSM 114642 / LMG 32736 / 3841) (Rhizobium leguminosarum bv. viciae)).